A 495-amino-acid chain; its full sequence is ATP synthase subunit beta, chloroplastic (495 aa).

172 to 179 (GGAGVGKT) serves as a coordination point for ATP.

This sequence belongs to the ATPase alpha/beta chains family. In terms of assembly, F-type ATPases have 2 components, CF(1) - the catalytic core - and CF(0) - the membrane proton channel. CF(1) has five subunits: alpha(3), beta(3), gamma(1), delta(1), epsilon(1). CF(0) has four main subunits: a(1), b(1), b'(1) and c(9-12).

It is found in the plastid. It localises to the chloroplast thylakoid membrane. It carries out the reaction ATP + H2O + 4 H(+)(in) = ADP + phosphate + 5 H(+)(out). Functionally, produces ATP from ADP in the presence of a proton gradient across the membrane. The catalytic sites are hosted primarily by the beta subunits. This is ATP synthase subunit beta, chloroplastic from Pteridium aquilinum (Bracken fern).